A 235-amino-acid polypeptide reads, in one-letter code: tRNA pseudouridine synthase B (235 aa).

Asp-48 serves as the catalytic Nucleophile.

The protein belongs to the pseudouridine synthase TruB family. Type 1 subfamily.

It catalyses the reaction uridine(55) in tRNA = pseudouridine(55) in tRNA. In terms of biological role, responsible for synthesis of pseudouridine from uracil-55 in the psi GC loop of transfer RNAs. The polypeptide is tRNA pseudouridine synthase B (Parabacteroides distasonis (strain ATCC 8503 / DSM 20701 / CIP 104284 / JCM 5825 / NCTC 11152)).